The primary structure comprises 163 residues: Photosystem II extrinsic protein V (163 aa).

Residues 1-26 (MFRRLIGVVVATVLLSFQLLVGSATA) form the signal peptide. 4 residues coordinate heme c: Cys63, Cys66, His67, and His118.

The protein belongs to the cytochrome c family. PsbV subfamily. PSII is composed of 1 copy each of membrane proteins PsbA, PsbB, PsbC, PsbD, PsbE, PsbF, PsbH, PsbI, PsbJ, PsbK, PsbL, PsbM, PsbT, PsbX, PsbY, PsbZ, Psb30/Ycf12, peripheral proteins PsbO, CyanoQ (PsbQ), PsbU, PsbV and a large number of cofactors. It forms dimeric complexes. The cofactor is heme c.

The protein localises to the cellular thylakoid membrane. In terms of biological role, one of the extrinsic, lumenal subunits of photosystem II (PSII). PSII is a light-driven water plastoquinone oxidoreductase, using light energy to abstract electrons from H(2)O, generating a proton gradient subsequently used for ATP formation. The extrinsic proteins stabilize the structure of photosystem II oxygen-evolving complex (OEC), the ion environment of oxygen evolution and protect the OEC against heat-induced inactivation. Low-potential cytochrome c that plays a role in the OEC of PSII. The sequence is that of Photosystem II extrinsic protein V from Nostoc punctiforme (strain ATCC 29133 / PCC 73102).